We begin with the raw amino-acid sequence, 338 residues long: Nucleoid-associated protein PM1885 (338 aa).

The protein belongs to the YejK family.

It is found in the cytoplasm. Its subcellular location is the nucleoid. The sequence is that of Nucleoid-associated protein PM1885 from Pasteurella multocida (strain Pm70).